The chain runs to 371 residues: tRNA-specific 2-thiouridylase MnmA (371 aa).

ATP-binding positions include 13–20 (GMSGGVDS) and Met-39. The interaction with target base in tRNA stretch occupies residues 99-101 (NPD). Residue Cys-104 is the Nucleophile of the active site. Cys-104 and Cys-200 are oxidised to a cystine. Gly-128 lines the ATP pocket. The tract at residues 150–152 (KDQ) is interaction with tRNA. The active-site Cysteine persulfide intermediate is Cys-200. Positions 308–309 (RY) are interaction with tRNA.

This sequence belongs to the MnmA/TRMU family.

It localises to the cytoplasm. It catalyses the reaction S-sulfanyl-L-cysteinyl-[protein] + uridine(34) in tRNA + AH2 + ATP = 2-thiouridine(34) in tRNA + L-cysteinyl-[protein] + A + AMP + diphosphate + H(+). Catalyzes the 2-thiolation of uridine at the wobble position (U34) of tRNA, leading to the formation of s(2)U34. The sequence is that of tRNA-specific 2-thiouridylase MnmA from Bacillus thuringiensis (strain Al Hakam).